Consider the following 578-residue polypeptide: Sulfite reductase [NADPH] hemoprotein beta-component (578 aa).

Positions 1–21 (MTNTLAGPDRSRDISQPLEKL) are disordered. Cysteine 443, cysteine 449, cysteine 488, and cysteine 492 together coordinate [4Fe-4S] cluster. Residue cysteine 492 coordinates siroheme.

It belongs to the nitrite and sulfite reductase 4Fe-4S domain family. Alpha(8)-beta(8). The alpha component is a flavoprotein, the beta component is a hemoprotein. Siroheme is required as a cofactor. The cofactor is [4Fe-4S] cluster.

It catalyses the reaction hydrogen sulfide + 3 NADP(+) + 3 H2O = sulfite + 3 NADPH + 4 H(+). It participates in sulfur metabolism; hydrogen sulfide biosynthesis; hydrogen sulfide from sulfite (NADPH route): step 1/1. Component of the sulfite reductase complex that catalyzes the 6-electron reduction of sulfite to sulfide. This is one of several activities required for the biosynthesis of L-cysteine from sulfate. The polypeptide is Sulfite reductase [NADPH] hemoprotein beta-component (Methylocella silvestris (strain DSM 15510 / CIP 108128 / LMG 27833 / NCIMB 13906 / BL2)).